The chain runs to 150 residues: UPF0336 protein SAV_4901 (150 aa).

In terms of domain architecture, MaoC-like spans 8–126 (VGRSYPPTDP…GNDVVDVRGE (119 aa)).

This sequence belongs to the UPF0336 family.

This is UPF0336 protein SAV_4901 from Streptomyces avermitilis (strain ATCC 31267 / DSM 46492 / JCM 5070 / NBRC 14893 / NCIMB 12804 / NRRL 8165 / MA-4680).